The following is a 95-amino-acid chain: Protein TusB (95 aa).

Belongs to the DsrH/TusB family. As to quaternary structure, heterohexamer, formed by a dimer of trimers. The hexameric TusBCD complex contains 2 copies each of TusB, TusC and TusD. The TusBCD complex interacts with TusE.

The protein resides in the cytoplasm. Part of a sulfur-relay system required for 2-thiolation of 5-methylaminomethyl-2-thiouridine (mnm(5)s(2)U) at tRNA wobble positions. This is Protein TusB from Salmonella arizonae (strain ATCC BAA-731 / CDC346-86 / RSK2980).